We begin with the raw amino-acid sequence, 151 residues long: Copper transporter 3 (151 aa).

A run of 2 helical transmembrane segments spans residues 52–72 (LKMY…SECL) and 103–123 (YLVM…AMAG).

Belongs to the copper transporter (Ctr) (TC 1.A.56) family. SLC31A subfamily. Highly expressed in stems and at lower levels in leaves and flowers.

The protein localises to the membrane. Its function is as follows. Involved in the transport of copper. The sequence is that of Copper transporter 3 (COPT3) from Arabidopsis thaliana (Mouse-ear cress).